Here is a 179-residue protein sequence, read N- to C-terminus: Large ribosomal subunit protein uL5 (179 aa).

Belongs to the universal ribosomal protein uL5 family. Part of the 50S ribosomal subunit; part of the 5S rRNA/L5/L18/L25 subcomplex. Contacts the 5S rRNA and the P site tRNA. Forms a bridge to the 30S subunit in the 70S ribosome.

In terms of biological role, this is one of the proteins that bind and probably mediate the attachment of the 5S RNA into the large ribosomal subunit, where it forms part of the central protuberance. In the 70S ribosome it contacts protein S13 of the 30S subunit (bridge B1b), connecting the 2 subunits; this bridge is implicated in subunit movement. Contacts the P site tRNA; the 5S rRNA and some of its associated proteins might help stabilize positioning of ribosome-bound tRNAs. This Herminiimonas arsenicoxydans protein is Large ribosomal subunit protein uL5.